The chain runs to 437 residues: Glutamate-1-semialdehyde 2,1-aminomutase (437 aa).

Position 273 is an N6-(pyridoxal phosphate)lysine (Lys273).

This sequence belongs to the class-III pyridoxal-phosphate-dependent aminotransferase family. HemL subfamily. In terms of assembly, homodimer. Requires pyridoxal 5'-phosphate as cofactor.

Its subcellular location is the cytoplasm. The catalysed reaction is (S)-4-amino-5-oxopentanoate = 5-aminolevulinate. Its pathway is porphyrin-containing compound metabolism; protoporphyrin-IX biosynthesis; 5-aminolevulinate from L-glutamyl-tRNA(Glu): step 2/2. This chain is Glutamate-1-semialdehyde 2,1-aminomutase, found in Chlamydia abortus (strain DSM 27085 / S26/3) (Chlamydophila abortus).